The primary structure comprises 351 residues: Photosystem II D2 protein (351 aa).

The helical transmembrane segment at 39-59 (TAYLAVGGWFTGTTFVTSWYT) threads the bilayer. His-116 is a binding site for chlorophyll a. A helical transmembrane segment spans residues 123–139 (GFCLRQFEIARLVGIRP). Pheophytin a is bound by residues Gln-128 and Asn-141. A helical transmembrane segment spans residues 151–164 (IFVSVFLLYPLGQA). Residue His-196 coordinates chlorophyll a. A helical membrane pass occupies residues 206–226 (GALLCAIHGATVENTLFEDGD). A plastoquinone contacts are provided by His-213 and Phe-260. His-213 contributes to the Fe cation binding site. His-267 serves as a coordination point for Fe cation. A helical membrane pass occupies residues 277-293 (GLWTSAIGIVGLALNLR).

The protein belongs to the reaction center PufL/M/PsbA/D family. As to quaternary structure, PSII is composed of 1 copy each of membrane proteins PsbA, PsbB, PsbC, PsbD, PsbE, PsbF, PsbH, PsbI, PsbJ, PsbK, PsbL, PsbM, PsbT, PsbX, PsbY, PsbZ, Psb30/Ycf12, at least 3 peripheral proteins of the oxygen-evolving complex and a large number of cofactors. It forms dimeric complexes. It depends on The D1/D2 heterodimer binds P680, chlorophylls that are the primary electron donor of PSII, and subsequent electron acceptors. It shares a non-heme iron and each subunit binds pheophytin, quinone, additional chlorophylls, carotenoids and lipids. There is also a Cl(-1) ion associated with D1 and D2, which is required for oxygen evolution. The PSII complex binds additional chlorophylls, carotenoids and specific lipids. as a cofactor.

It is found in the plastid. The protein localises to the chloroplast thylakoid membrane. It carries out the reaction 2 a plastoquinone + 4 hnu + 2 H2O = 2 a plastoquinol + O2. Its function is as follows. Photosystem II (PSII) is a light-driven water:plastoquinone oxidoreductase that uses light energy to abstract electrons from H(2)O, generating O(2) and a proton gradient subsequently used for ATP formation. It consists of a core antenna complex that captures photons, and an electron transfer chain that converts photonic excitation into a charge separation. The D1/D2 (PsbA/PsbD) reaction center heterodimer binds P680, the primary electron donor of PSII as well as several subsequent electron acceptors. D2 is needed for assembly of a stable PSII complex. This is Photosystem II D2 protein from Heterosigma akashiwo (strain NIES-293 / 8280G21-1).